We begin with the raw amino-acid sequence, 368 residues long: Aspartate-semialdehyde dehydrogenase (368 aa).

NADP(+)-binding positions include 10–13 (RGMV), 37–38 (TS), and glutamine 74. Arginine 103 contributes to the phosphate binding site. Residue cysteine 136 is the Acyl-thioester intermediate of the active site. Cysteine 136 bears the S-cysteinyl cysteine; in inhibited form mark. Glutamine 163 lines the substrate pocket. NADP(+) is bound by residues 166-167 (SG) and proline 194. Glutamate 242 provides a ligand contact to substrate. Lysine 245 lines the phosphate pocket. Arginine 268 contacts substrate. The Proton acceptor role is filled by histidine 275. An NADP(+)-binding site is contributed by glutamine 351.

It belongs to the aspartate-semialdehyde dehydrogenase family. In terms of assembly, homodimer.

It carries out the reaction L-aspartate 4-semialdehyde + phosphate + NADP(+) = 4-phospho-L-aspartate + NADPH + H(+). It participates in amino-acid biosynthesis; L-lysine biosynthesis via DAP pathway; (S)-tetrahydrodipicolinate from L-aspartate: step 2/4. Its pathway is amino-acid biosynthesis; L-methionine biosynthesis via de novo pathway; L-homoserine from L-aspartate: step 2/3. It functions in the pathway amino-acid biosynthesis; L-threonine biosynthesis; L-threonine from L-aspartate: step 2/5. Functionally, catalyzes the NADPH-dependent formation of L-aspartate-semialdehyde (L-ASA) by the reductive dephosphorylation of L-aspartyl-4-phosphate. The sequence is that of Aspartate-semialdehyde dehydrogenase from Salmonella typhi.